The sequence spans 520 residues: Nonsense-mediated mRNA decay factor SMG9 (520 aa).

Residues 1–143 (MSESGHSQPG…KGEKEGQRPT (143 aa)) form a disordered region. Position 2 is an N-acetylserine (S2). S2, S4, S7, S32, and S53 each carry phosphoserine. The segment covering 36 to 53 (GRERDYIAPWERERRDGS) has biased composition (basic and acidic residues). Pro residues predominate over residues 78–94 (QPPPPAAPAAPPAPAPL). A compositionally biased stretch (low complexity) spans 109–121 (GPAATTSTSTPEG). The span at 122–133 (TAPPPPAAPVPP) shows a compositional bias: pro residues. S451 is modified (phosphoserine).

This sequence belongs to the SMG9 family. In terms of assembly, self-associates to form homodimers and forms heterodimers with SMG8; these assembly forms may represent SMG1C intermediate forms. Component of the SMG1C complex composed of SMG1, SMG8 and SMG9. Self-associates to form homodimers and forms heterodimers with SMG8; these assembly forms may represent SMG1C intermediate forms. Interacts with DHX34; the interaction is RNA-independent. Post-translationally, phosphorylated by SMG1.

Involved in nonsense-mediated decay (NMD) of mRNAs containing premature stop codons. Is recruited by release factors to stalled ribosomes together with SMG1 and SMG8 (forming the SMG1C protein kinase complex) and, in the SMG1C complex, is required for the efficient association between SMG1 and SMG8. Plays a role in brain, heart, and eye development. The chain is Nonsense-mediated mRNA decay factor SMG9 from Bos taurus (Bovine).